The sequence spans 390 residues: Phosphopentomutase (390 aa).

6 residues coordinate Mn(2+): Asp-12, Asp-284, His-289, Asp-325, His-326, and His-337.

The protein belongs to the phosphopentomutase family. It depends on Mn(2+) as a cofactor.

It localises to the cytoplasm. It carries out the reaction 2-deoxy-alpha-D-ribose 1-phosphate = 2-deoxy-D-ribose 5-phosphate. The enzyme catalyses alpha-D-ribose 1-phosphate = D-ribose 5-phosphate. The protein operates within carbohydrate degradation; 2-deoxy-D-ribose 1-phosphate degradation; D-glyceraldehyde 3-phosphate and acetaldehyde from 2-deoxy-alpha-D-ribose 1-phosphate: step 1/2. Its function is as follows. Isomerase that catalyzes the conversion of deoxy-ribose 1-phosphate (dRib-1-P) and ribose 1-phosphate (Rib-1-P) to deoxy-ribose 5-phosphate (dRib-5-P) and ribose 5-phosphate (Rib-5-P), respectively. This is Phosphopentomutase from Macrococcus caseolyticus (strain JCSC5402) (Macrococcoides caseolyticum).